The following is a 206-amino-acid chain: Pyridoxine/pyridoxamine 5'-phosphate oxidase (206 aa).

FMN contacts are provided by residues 53–58, 68–69, Lys75, and Gln97; these read RMVLLK and YT. Lys58 provides a ligand contact to substrate. Residues Tyr115, Arg119, and Ser123 each coordinate substrate. FMN is bound by residues 132–133 and Trp177; that span reads QS. Position 183–185 (183–185) interacts with substrate; the sequence is RLH. Residue Arg187 participates in FMN binding.

Belongs to the pyridoxamine 5'-phosphate oxidase family. As to quaternary structure, homodimer. It depends on FMN as a cofactor.

It catalyses the reaction pyridoxamine 5'-phosphate + O2 + H2O = pyridoxal 5'-phosphate + H2O2 + NH4(+). The catalysed reaction is pyridoxine 5'-phosphate + O2 = pyridoxal 5'-phosphate + H2O2. It participates in cofactor metabolism; pyridoxal 5'-phosphate salvage; pyridoxal 5'-phosphate from pyridoxamine 5'-phosphate: step 1/1. It functions in the pathway cofactor metabolism; pyridoxal 5'-phosphate salvage; pyridoxal 5'-phosphate from pyridoxine 5'-phosphate: step 1/1. In terms of biological role, catalyzes the oxidation of either pyridoxine 5'-phosphate (PNP) or pyridoxamine 5'-phosphate (PMP) into pyridoxal 5'-phosphate (PLP). The sequence is that of Pyridoxine/pyridoxamine 5'-phosphate oxidase from Agrobacterium fabrum (strain C58 / ATCC 33970) (Agrobacterium tumefaciens (strain C58)).